The primary structure comprises 2544 residues: DNA polymerase theta (2544 aa).

Over residues 1 to 13 (MSLPRRSRKRRRS) the composition is skewed to basic residues. A disordered region spans residues 1–57 (MSLPRRSRKRRRSSSGSDTFSGDGDSFVSPQLRCGPVLSPPPGLGRGRRLTGTGTNK). The segment covering 14 to 29 (SSGSDTFSGDGDSFVS) has biased composition (low complexity). ATP contacts are provided by residues Gln95 and 114-121 (APTSAGKT). The Helicase ATP-binding domain occupies 101-285 (LGHVLEGKNL…WLNAELYHTD (185 aa)). Residues 101–551 (LGHVLEGKNL…STSQDMQTYA (451 aa)) are helicase activity. The short motif at 215–218 (DELH) is the DEAH box element. The region spanning 320–551 (GDEDHIVSLC…STSQDMQTYA (232 aa)) is the Helicase C-terminal domain. Positions 844–890 (DEEEEAAEERRSMRTIWVTGKGLSAREAAALIVEEAKMILQQDLIEM) are interaction with RAD51. Positions 896 to 955 (PKSPLSSSTHSRTSTSEVKEHTFKSQTKSSHKRLASMGRNSIRASGSNDKPSPDAERGID) are disordered. Low complexity predominate over residues 898 to 911 (SPLSSSTHSRTSTS). The segment covering 933-945 (GRNSIRASGSNDK) has biased composition (polar residues). Residues 946 to 955 (PSPDAERGID) show a composition bias toward basic and acidic residues. Lys983 is subject to N6-acetyllysine. Polar residues predominate over residues 1022–1034 (LSFSSEQVNNTLP). Disordered stretches follow at residues 1022–1058 (LSFS…GMHR) and 1128–1167 (VGHP…ESQL). Residues 1128-1139 (VGHPAAGSSPAA) show a composition bias toward low complexity. Residues 1140–1155 (ARDRRGLAARETEKGN) are compositionally biased toward basic and acidic residues. Ser1265 bears the Phosphoserine mark. 2 disordered regions span residues 1266-1288 (GVQG…SNPA) and 1331-1353 (QNKC…DHVD). Phosphoserine occurs at positions 1438, 1442, 1444, and 1449. Residues 1478 to 1501 (FSNPPHPQEDPVMTPTVSEPQGTQ) form a disordered region. Over residues 1492–1501 (PTVSEPQGTQ) the composition is skewed to polar residues. Phosphoserine is present on residues Ser1511, Ser1519, Ser1585, and Ser1592. Positions 1557–1591 (ECPQGKLVRGDQNEGSPKPKLTETNQDNSFTWSGA) are disordered. The segment covering 1578-1591 (TETNQDNSFTWSGA) has biased composition (polar residues). Composition is skewed to basic and acidic residues over residues 1606-1616 (VSSPRENEKPK) and 1628-1638 (NSKESHEREEI). The segment at 1606-1697 (VSSPRENEKP…GLIPPTPVPA (92 aa)) is disordered. Residues 1641-1652 (DLGTVQRTSVFP) are compositionally biased toward polar residues. The segment covering 1656 to 1667 (VKNRTEGLESKA) has biased composition (basic and acidic residues). At Thr1710 the chain carries Phosphothreonine. Residues 2052–2538 (AECESQKHVM…KVKIGASWGE (487 aa)) are DNA polymerase activity. Loop stretches follow at residues 2097–2132 (KLPP…GRQF) and 2212–2276 (EIKM…VPFP). The span at 2104–2117 (MKTQGSKKTLGSTR) shows a compositional bias: polar residues. Residues 2104–2124 (MKTQGSKKTLGSTRRGNESGR) form a disordered region. Asp2284 serves as the catalytic For DNA polymerase activity. 2 residues coordinate Mg(2+): Asp2284 and Tyr2285. The loop 3 stretch occupies residues 2445–2489 (QLETFRSTFKSHGHRESMLQNDRTGLLPKRKLKGMFCPMRGGFFI). Asp2494 contributes to the Mg(2+) binding site.

It belongs to the DNA polymerase type-A family. As to quaternary structure, homomultimer; forms homodimers and homotetramers. Interacts with RAD51. Interacts with ORC2 and ORC4. Interacts with RHNO1; interaction takes place during mitosis and promotes POLQ recruitment to DNA damage sites. Interacts (when phosphorylated) with TOPBP1 (via BRCT domains 7 and 8); promoting POLQ recruitment to DNA damage sites. The cofactor is Mg(2+). Post-translationally, phosphorylated by PLK1; promoting interaction with TOPBP1 and recruitment to DNA damage sites.

Its subcellular location is the nucleus. The protein resides in the chromosome. The catalysed reaction is DNA(n) + a 2'-deoxyribonucleoside 5'-triphosphate = DNA(n+1) + diphosphate. It catalyses the reaction ATP + H2O = ADP + phosphate + H(+). Functionally, low-fidelity DNA polymerase with a helicase activity that promotes microhomology-mediated end-joining (MMEJ), an alternative non-homologous end-joining (NHEJ) machinery required to repair double-strand breaks in DNA during mitosis. MMEJ is an error-prone repair pathway that produces deletions of sequences from the strand being repaired and promotes genomic rearrangements, such as telomere fusions, some of them leading to cellular transformation. MMEJ is required during mitosis to repair persistent double-strand breaks that originate in S-phase. Although error-prone, MMEJ protects against chromosomal instability and tumorigenesis. The polymerase acts by binding directly the 2 ends of resected double-strand breaks, allowing microhomologous sequences in the overhangs to form base pairs. It then extends each strand from the base-paired region using the opposing overhang as a template. Requires partially resected DNA containing 2 to 6 base pairs of microhomology to perform MMEJ. The polymerase lacks proofreading activity and is highly promiscuous: unlike most polymerases, promotes extension of ssDNA and partial ssDNA (pssDNA) substrates. When the ends of a break do not contain terminal microhomology must identify embedded complementary sequences through a scanning step. Also acts as a DNA helicase, promoting dissociation of the replication protein A complex (RPA/RP-A), composed of RPA1, RPA2 and RPA3, from resected double-strand breaks to allow their annealing and subsequent joining by MMEJ. Removal of RPA/RP-A complex proteins prevents RAD51 accumulation at resected ends, thereby inhibiting homology-recombination repair (HR) pathway. Also shows RNA-directed DNA polymerase activity to mediate DNA repair in vitro; however this activity needs additional evidence in vivo. May also have lyase activity. Involved in somatic hypermutation of immunoglobulin genes, a process that requires the activity of DNA polymerases to ultimately introduce mutations at both A/T and C/G base pairs. However, POLQ does not play a major role in somatic hypermutation. POLQ-mediated end joining activity is involved in random integration of exogenous DNA hampers. This is DNA polymerase theta from Mus musculus (Mouse).